The primary structure comprises 158 residues: Cyclic pyranopterin monophosphate synthase (158 aa).

Substrate contacts are provided by residues 75–77 (LCH) and 113–114 (ME). Aspartate 128 is an active-site residue.

The protein belongs to the MoaC family. In terms of assembly, homohexamer; trimer of dimers.

It catalyses the reaction (8S)-3',8-cyclo-7,8-dihydroguanosine 5'-triphosphate = cyclic pyranopterin phosphate + diphosphate. It participates in cofactor biosynthesis; molybdopterin biosynthesis. In terms of biological role, catalyzes the conversion of (8S)-3',8-cyclo-7,8-dihydroguanosine 5'-triphosphate to cyclic pyranopterin monophosphate (cPMP). The polypeptide is Cyclic pyranopterin monophosphate synthase (Acidiphilium cryptum (strain JF-5)).